Here is a 160-residue protein sequence, read N- to C-terminus: Coat protein TP3 (160 aa).

The protein localises to the virion. In Thermoproteus tenax (TTV1), this protein is Coat protein TP3.